A 350-amino-acid chain; its full sequence is Purine-rich element-binding protein gamma (350 aa).

Disordered regions lie at residues 1–59 and 136–172; these read MERA…GTSE and GHRQEHGQSKEQVSRRRQKHSAPSPPVSVGSEEHPHS. Over residues 9–27 the composition is skewed to gly residues; that stretch reads GGGSGGGRGRGGKNVGGPG. Polar residues predominate over residues 47 to 59; sequence ASATPNQSGGTSE. The DNA-binding element occupies 54 to 296; that stretch reads SGGTSEIQEL…GIFLKVSEVR (243 aa). Over residues 137-149 the composition is skewed to basic and acidic residues; sequence HRQEHGQSKEQVS. Phosphoserine is present on residues Ser163, Ser166, and Ser342.

This sequence belongs to the PUR DNA-binding protein family. Isoform 1 is expressed in testis. Isoform 2 is expressed in blastocyst and kidney.

It is found in the nucleus. This chain is Purine-rich element-binding protein gamma (Purg), found in Mus musculus (Mouse).